The sequence spans 310 residues: Deoxypodophyllotoxin synthase (310 aa).

One can recognise a Fe2OG dioxygenase domain in the interval 159–258; sequence STNYLLHFMR…RLSTSSFSFP (100 aa). Fe cation-binding residues include His184, Asp186, and His239. Arg249 contacts 2-oxoglutarate.

It belongs to the iron/ascorbate-dependent oxidoreductase family. Fe(2+) is required as a cofactor. As to expression, mostly expressed in leaves and stems.

It catalyses the reaction (-)-yatein + 2-oxoglutarate + O2 = (-)-deoxypodophyllotoxin + succinate + CO2 + H2O. It functions in the pathway aromatic compound metabolism; phenylpropanoid biosynthesis. 2-oxoglutarate-dependent dioxygenase involved in the biosynthesis of etoposide, a chemotherapeutic compound of the topoisomerase inhibitor family. Catalyzes the conversion of yatein to deoxypodophyllotoxin. Can also use, to some extent, demethylyatein as substrate. In Sinopodophyllum hexandrum (Himalayan may apple), this protein is Deoxypodophyllotoxin synthase.